Here is a 543-residue protein sequence, read N- to C-terminus: Zinc metalloproteinase (543 aa).

The N-terminal stretch at 1–24 (MHPNYYLSPLAVAIALGIASPVKA) is a signal peptide. A propeptide spanning residues 25–207 (ADPIPLQKSS…PFVQWDDVKT (183 aa)) is cleaved from the precursor. Position 377 (histidine 377) interacts with Zn(2+). Residue glutamate 378 is part of the active site. Histidine 381 and glutamate 401 together coordinate Zn(2+). Residue histidine 463 is the Proton donor of the active site.

This sequence belongs to the peptidase M4 family. The cofactor is Zn(2+).

The protein localises to the secreted. Functionally, cleaves collagen, gelatin, casein, alpha-1-antitrypsin, and bovine insulin. May play a role in the pathogenesis of legionnaires disease. The chain is Zinc metalloproteinase from Legionella pneumophila.